The primary structure comprises 210 residues: Ribosomal RNA small subunit methyltransferase G (210 aa).

Residues glycine 76, methionine 81, 127–128, and arginine 145 contribute to the S-adenosyl-L-methionine site; that span reads VE.

The protein belongs to the methyltransferase superfamily. RNA methyltransferase RsmG family.

The protein localises to the cytoplasm. The enzyme catalyses guanosine(527) in 16S rRNA + S-adenosyl-L-methionine = N(7)-methylguanosine(527) in 16S rRNA + S-adenosyl-L-homocysteine. Specifically methylates the N7 position of guanine in position 527 of 16S rRNA. The sequence is that of Ribosomal RNA small subunit methyltransferase G from Acinetobacter baumannii (strain AB307-0294).